The sequence spans 67 residues: uncharacterized protein (67 aa).

Transmembrane regions (helical) follow at residues 10-32 (NLSHVLALFLVSFILMAPYTAFI) and 44-66 (ATLTGIVAGILSNPGLFAYMGQW).

It is found in the cell membrane. This is an uncharacterized protein from Archaeoglobus fulgidus (strain ATCC 49558 / DSM 4304 / JCM 9628 / NBRC 100126 / VC-16).